Here is a 149-residue protein sequence, read N- to C-terminus: Endoribonuclease YbeY (149 aa).

The Zn(2+) site is built by histidine 101, histidine 105, and histidine 111.

It belongs to the endoribonuclease YbeY family. Zn(2+) serves as cofactor.

It localises to the cytoplasm. Functionally, single strand-specific metallo-endoribonuclease involved in late-stage 70S ribosome quality control and in maturation of the 3' terminus of the 16S rRNA. The chain is Endoribonuclease YbeY from Thermotoga neapolitana (strain ATCC 49049 / DSM 4359 / NBRC 107923 / NS-E).